Reading from the N-terminus, the 84-residue chain is MAHKKGASSSRNGRDSAAQRLGVKRFGGQLVSAGEIIIRQRGTKFHPGDLVGRGGDDTLFALAAGSVQFGTKRGRKTVSIVPQQ.

The protein belongs to the bacterial ribosomal protein bL27 family.

This Salinispora tropica (strain ATCC BAA-916 / DSM 44818 / JCM 13857 / NBRC 105044 / CNB-440) protein is Large ribosomal subunit protein bL27.